Here is a 329-residue protein sequence, read N- to C-terminus: Lipoyl synthase (329 aa).

The [4Fe-4S] cluster site is built by Cys-72, Cys-77, Cys-83, Cys-98, Cys-102, Cys-105, and Ser-313. Residues 83-303 form the Radical SAM core domain; the sequence is CWSHGTATIM…QIGLKKGFFE (221 aa).

This sequence belongs to the radical SAM superfamily. Lipoyl synthase family. [4Fe-4S] cluster is required as a cofactor.

The protein resides in the cytoplasm. The catalysed reaction is [[Fe-S] cluster scaffold protein carrying a second [4Fe-4S](2+) cluster] + N(6)-octanoyl-L-lysyl-[protein] + 2 oxidized [2Fe-2S]-[ferredoxin] + 2 S-adenosyl-L-methionine + 4 H(+) = [[Fe-S] cluster scaffold protein] + N(6)-[(R)-dihydrolipoyl]-L-lysyl-[protein] + 4 Fe(3+) + 2 hydrogen sulfide + 2 5'-deoxyadenosine + 2 L-methionine + 2 reduced [2Fe-2S]-[ferredoxin]. The protein operates within protein modification; protein lipoylation via endogenous pathway; protein N(6)-(lipoyl)lysine from octanoyl-[acyl-carrier-protein]: step 2/2. Functionally, catalyzes the radical-mediated insertion of two sulfur atoms into the C-6 and C-8 positions of the octanoyl moiety bound to the lipoyl domains of lipoate-dependent enzymes, thereby converting the octanoylated domains into lipoylated derivatives. The protein is Lipoyl synthase of Legionella pneumophila (strain Paris).